Reading from the N-terminus, the 248-residue chain is Neurovirulence factor ICP34.5 (248 aa).

A compositionally biased stretch (basic residues) spans 1 to 14 (MARRRRHRGPRRPR). Residues 1–16 (MARRRRHRGPRRPRPP) are required for nucleolar localization. Disordered regions lie at residues 1–129 (MARR…FRLP) and 149–174 (RRAG…TPAT). Positions 24 to 35 (TAQSQVTSTPNS) are enriched in polar residues. Residues 45–58 (AAPPPPPAGGPPPS) are compositionally biased toward pro residues. The span at 73 to 83 (ASDDDDDDDWP) shows a compositional bias: acidic residues. Composition is skewed to pro residues over residues 84–93 (DSPPPEPAPE) and 119–128 (SHPPSRPFRL). Residues 128 to 137 (LPPRLALRLR) carry the Nuclear export signal motif. 5 tandem repeats follow at residues 161–163 (ATP), 164–166 (ATP), 167–169 (ATP), 170–172 (ATP), and 173–175 (ATP). The interval 161-175 (ATPATPATPATPATP) is 5 X 3 AA tandem repeats of A-T-P. The span at 164 to 174 (ATPATPATPAT) shows a compositional bias: low complexity. The binding to PP1CA stretch occupies residues 175–188 (PARVRFSPHVRVRH). The interval 175 to 188 (PARVRFSPHVRVRH) is interaction with host PPP1CA. Residues 190–248 (VVWASAARLARRGSWARERADRARFRRRVAEAEAVIGPCLGPEARARALARGAGPANSV) form an important for interferon resistance region. Residues 200–218 (RRGSWARERADRARFRRRV) carry the Bipartite nuclear localization signal motif. Residues 218 to 233 (VAEAEAVIGPCLGPEA) form an interaction with host EIF2S1/EIF-2ALPHA region.

The protein belongs to the PPP1R15 family. In terms of assembly, interacts with host PPP1CA; this interaction forms a high-molecular-weight complex that dephosphorylates EIF2S1/eIF-2alpha. Interacts with host EIF2S1/eIF-2alpha; this interaction is crucial for the specific dephosphorylation of EIF2S1/eIF-2alpha by PPP1CA. Binds to proliferating cell nuclear antigen (PCNA), which may release host cells from growth arrest and facilitate viral replication. Interacts (via N-terminus) with host C1QBP; this interaction allows C1QBP to be recruited to the inner nuclear membrane by ICP34.5. Interacts with host PRKCA. Interacts with protein UL31. Interacts with host STING/TMEM173; this interaction inhibits the intracellular DNA sensing pathway. Interacts with host BECN1; this interaction modulates host autophagy.

It is found in the host cytoplasm. It localises to the host nucleus. The protein localises to the host nucleolus. The protein resides in the virion. Functionally, inhibits the establishment of the immune response and of the integrated stress response (ISR) in the infected cell. Plays essential roles in viral nuclear egress to mediate capsid transit across the nuclear membrane. Facilitates nuclear egress cooperatively with host C1QBP and protein kinase C/PKC to induce lamin A/C phosphorylation and subsequent reorganization. In turn, lamina disassembles and nuclear egress occurs. Recruits the serine/threonine protein phosphatase PPP1CA/PP1-alpha to dephosphorylate the translation initiation factor EIF2S1/eIF-2alpha, thereby couteracting the host shutoff of protein synthesis involving double-stranded RNA-dependent protein kinase EIF2AK2/PKR. In turn, controls host IRF3 activation and subsequently inhibits host interferon response. Controls the DNA sensing pathway by interacting with and inhibiting host STING/TMEM173. Also down-modulates the host MHC class II proteins cell surface expression. Acts as a neurovirulence factor that has a profound effect on the growth of the virus in central nervous system tissue, by interacting with host BECN1 and thereby antagonizing the host autophagy response. The polypeptide is Neurovirulence factor ICP34.5 (ICP34.5) (Homo sapiens (Human)).